The chain runs to 1116 residues: Error-prone DNA polymerase 1 (1116 aa).

This sequence belongs to the DNA polymerase type-C family. DnaE2 subfamily.

The protein resides in the cytoplasm. The enzyme catalyses DNA(n) + a 2'-deoxyribonucleoside 5'-triphosphate = DNA(n+1) + diphosphate. Functionally, DNA polymerase involved in damage-induced mutagenesis and translesion synthesis (TLS). It is not the major replicative DNA polymerase. The polypeptide is Error-prone DNA polymerase 1 (Rhizobium meliloti (strain 1021) (Ensifer meliloti)).